Here is a 206-residue protein sequence, read N- to C-terminus: MKAKREALISLFTAIKEGKVDEDIIDLLMLINSIKGVYTTSSCSGRIGIIEEPSLGAKPLSRWLIKVHRPMEFEEAIDALKKANKGIIFLKSQPPILHVVAENLEMAKLLHQIGLSSGFKYTTFKVISNRYLVEINGTEYLTVPLGRDGKVLVSEEYLKFAVEIGNEMLRRGKSRLPRLYKNFQELKEKVGEDELFIALKREILGT.

The protein belongs to the TYW3 family.

The catalysed reaction is 4-demethyl-7-[(3S)-3-amino-3-carboxypropyl]wyosine(37) in tRNA(Phe) + S-adenosyl-L-methionine = 7-[(3S)-3-amino-3-carboxypropyl]wyosine(37) in tRNA(Phe) + S-adenosyl-L-homocysteine + H(+). S-adenosyl-L-methionine-dependent methyltransferase that acts as a component of the wyosine derivatives biosynthesis pathway. Probably methylates N-4 position of wybutosine-86 to produce wybutosine-72. In Pyrococcus abyssi (strain GE5 / Orsay), this protein is tRNA(Phe) 7-((3-amino-3-carboxypropyl)-4-demethylwyosine(37)-N(4))-methyltransferase 2.